The primary structure comprises 413 residues: PCI domain-containing protein 2 homolog (413 aa).

The 182-residue stretch at 222-403 folds into the PCI domain; sequence VAYNYFLGRK…QKLVISKMNA (182 aa).

The protein belongs to the CSN12 family.

This chain is PCI domain-containing protein 2 homolog, found in Caenorhabditis elegans.